A 158-amino-acid polypeptide reads, in one-letter code: NADH-quinone oxidoreductase subunit B (158 aa).

[4Fe-4S] cluster contacts are provided by Cys-37, Cys-38, Cys-102, and Cys-132.

The protein belongs to the complex I 20 kDa subunit family. In terms of assembly, NDH-1 is composed of 14 different subunits. Subunits NuoB, C, D, E, F, and G constitute the peripheral sector of the complex. [4Fe-4S] cluster is required as a cofactor.

The protein resides in the cell inner membrane. It carries out the reaction a quinone + NADH + 5 H(+)(in) = a quinol + NAD(+) + 4 H(+)(out). In terms of biological role, NDH-1 shuttles electrons from NADH, via FMN and iron-sulfur (Fe-S) centers, to quinones in the respiratory chain. Couples the redox reaction to proton translocation (for every two electrons transferred, four hydrogen ions are translocated across the cytoplasmic membrane), and thus conserves the redox energy in a proton gradient. The polypeptide is NADH-quinone oxidoreductase subunit B (Aromatoleum aromaticum (strain DSM 19018 / LMG 30748 / EbN1) (Azoarcus sp. (strain EbN1))).